The sequence spans 240 residues: Chloroplastic group IIB intron splicing facilitator CRS2-B, chloroplastic (240 aa).

Belongs to the PTH family. CRS2 subfamily. In terms of assembly, part of large ribonucleo-protein complexes that include group IIB introns and either CAF1 or CAF2.

The protein resides in the plastid. It localises to the chloroplast stroma. In terms of biological role, required for the splicing of group IIB introns in chloroplasts. The chain is Chloroplastic group IIB intron splicing facilitator CRS2-B, chloroplastic (CRS2B) from Arabidopsis thaliana (Mouse-ear cress).